A 187-amino-acid polypeptide reads, in one-letter code: F-box protein At5g41720 (187 aa).

The region spanning 2–49 is the F-box domain; it reads MMNSPLDYDVLLEIMSYCPATEMAKFRLLSKECNKRSYEMSFINRHLH.

The protein is F-box protein At5g41720 of Arabidopsis thaliana (Mouse-ear cress).